Reading from the N-terminus, the 838-residue chain is Probable beta-glucosidase K (838 aa).

Asparagine 19 is a glycosylation site (N-linked (GlcNAc...) asparagine). Aspartate 232 is an active-site residue. Residues asparagine 324 and asparagine 489 are each glycosylated (N-linked (GlcNAc...) asparagine). A PA14 domain is found at 405–564; that stretch reads EGQPGLRMRF…DPELAIARAV (160 aa).

This sequence belongs to the glycosyl hydrolase 3 family.

It localises to the secreted. It carries out the reaction Hydrolysis of terminal, non-reducing beta-D-glucosyl residues with release of beta-D-glucose.. Its pathway is glycan metabolism; cellulose degradation. Functionally, beta-glucosidases are one of a number of cellulolytic enzymes involved in the degradation of cellulosic biomass. Catalyzes the last step releasing glucose from the inhibitory cellobiose. This is Probable beta-glucosidase K (bglK) from Emericella nidulans (strain FGSC A4 / ATCC 38163 / CBS 112.46 / NRRL 194 / M139) (Aspergillus nidulans).